We begin with the raw amino-acid sequence, 723 residues long: Translation initiation factor IF-2 (723 aa).

A disordered region spans residues 112-138; it reads KIFNNKKNKKQKPQQAPQQEVQKKKEK. Residues 114–123 are compositionally biased toward basic residues; it reads FNNKKNKKQK. Residues 224-393 form the tr-type G domain; that stretch reads ERPPVVTIMG…LLVSEMEELK (170 aa). The interval 233–240 is G1; that stretch reads GHVDHGKT. 233–240 serves as a coordination point for GTP; sequence GHVDHGKT. Residues 258-262 are G2; sequence GITQH. The tract at residues 279 to 282 is G3; sequence DTPG. GTP-binding positions include 279–283 and 333–336; these read DTPGH and NKID. The segment at 333 to 336 is G4; it reads NKID. A G5 region spans residues 369 to 371; the sequence is SAL.

Belongs to the TRAFAC class translation factor GTPase superfamily. Classic translation factor GTPase family. IF-2 subfamily.

The protein localises to the cytoplasm. Functionally, one of the essential components for the initiation of protein synthesis. Protects formylmethionyl-tRNA from spontaneous hydrolysis and promotes its binding to the 30S ribosomal subunits. Also involved in the hydrolysis of GTP during the formation of the 70S ribosomal complex. This chain is Translation initiation factor IF-2, found in Anoxybacillus flavithermus (strain DSM 21510 / WK1).